Consider the following 299-residue polypeptide: ATP phosphoribosyltransferase (299 aa).

It belongs to the ATP phosphoribosyltransferase family. Long subfamily. As to quaternary structure, equilibrium between an active dimeric form, an inactive hexameric form and higher aggregates. Interconversion between the various forms is largely reversible and is influenced by the natural substrates and inhibitors of the enzyme. Mg(2+) is required as a cofactor.

Its subcellular location is the cytoplasm. It catalyses the reaction 1-(5-phospho-beta-D-ribosyl)-ATP + diphosphate = 5-phospho-alpha-D-ribose 1-diphosphate + ATP. It functions in the pathway amino-acid biosynthesis; L-histidine biosynthesis; L-histidine from 5-phospho-alpha-D-ribose 1-diphosphate: step 1/9. Its activity is regulated as follows. Feedback inhibited by histidine. Functionally, catalyzes the condensation of ATP and 5-phosphoribose 1-diphosphate to form N'-(5'-phosphoribosyl)-ATP (PR-ATP). Has a crucial role in the pathway because the rate of histidine biosynthesis seems to be controlled primarily by regulation of HisG enzymatic activity. In Serratia proteamaculans (strain 568), this protein is ATP phosphoribosyltransferase.